The chain runs to 526 residues: Bifunctional purine biosynthesis protein PurH (526 aa).

One can recognise an MGS-like domain in the interval 15–161 (DVVPIRRALI…KNHANVAIVV (147 aa)).

This sequence belongs to the PurH family.

The catalysed reaction is (6R)-10-formyltetrahydrofolate + 5-amino-1-(5-phospho-beta-D-ribosyl)imidazole-4-carboxamide = 5-formamido-1-(5-phospho-D-ribosyl)imidazole-4-carboxamide + (6S)-5,6,7,8-tetrahydrofolate. It carries out the reaction IMP + H2O = 5-formamido-1-(5-phospho-D-ribosyl)imidazole-4-carboxamide. It functions in the pathway purine metabolism; IMP biosynthesis via de novo pathway; 5-formamido-1-(5-phospho-D-ribosyl)imidazole-4-carboxamide from 5-amino-1-(5-phospho-D-ribosyl)imidazole-4-carboxamide (10-formyl THF route): step 1/1. Its pathway is purine metabolism; IMP biosynthesis via de novo pathway; IMP from 5-formamido-1-(5-phospho-D-ribosyl)imidazole-4-carboxamide: step 1/1. The chain is Bifunctional purine biosynthesis protein PurH from Leifsonia xyli subsp. xyli (strain CTCB07).